Reading from the N-terminus, the 417-residue chain is Putative competence-damage inducible protein (417 aa).

The protein belongs to the CinA family.

This Oceanobacillus iheyensis (strain DSM 14371 / CIP 107618 / JCM 11309 / KCTC 3954 / HTE831) protein is Putative competence-damage inducible protein.